Consider the following 931-residue polypeptide: Dymeclin (931 aa).

3 disordered regions span residues 1 to 53 (MGVA…SSTT), 599 to 618 (SPSK…NTNN), and 839 to 931 (DANN…EKTN). Residue Gly2 is the site of N-myristoyl glycine attachment. 2 stretches are compositionally biased toward low complexity: residues 27 to 49 (NNNK…NNNN) and 601 to 618 (SKIN…NTNN). Positions 839-858 (DANNFTPKKQLSSDQLHSPP) are enriched in polar residues. 2 stretches are compositionally biased toward low complexity: residues 859–876 (TNTT…SSNT) and 889–901 (QLQQ…NQEQ). Positions 919 to 931 (TTGVELSSTEKTN) are enriched in polar residues.

Belongs to the dymeclin family.

This is Dymeclin (dym) from Dictyostelium discoideum (Social amoeba).